The primary structure comprises 150 residues: Large ribosomal subunit protein bL9 (150 aa).

The protein belongs to the bacterial ribosomal protein bL9 family.

Its function is as follows. Binds to the 23S rRNA. The polypeptide is Large ribosomal subunit protein bL9 (Shewanella baltica (strain OS155 / ATCC BAA-1091)).